A 490-amino-acid chain; its full sequence is Glutamate--tRNA ligase (490 aa).

The short motif at 12–22 (PSPTGTPHVGL) is the 'HIGH' region element. Residues 256-260 (KLSKR) carry the 'KMSKS' region motif. Lysine 259 provides a ligand contact to ATP.

Belongs to the class-I aminoacyl-tRNA synthetase family. Glutamate--tRNA ligase type 1 subfamily. As to quaternary structure, monomer.

The protein resides in the cytoplasm. The enzyme catalyses tRNA(Glu) + L-glutamate + ATP = L-glutamyl-tRNA(Glu) + AMP + diphosphate. Catalyzes the attachment of glutamate to tRNA(Glu) in a two-step reaction: glutamate is first activated by ATP to form Glu-AMP and then transferred to the acceptor end of tRNA(Glu). In Mycobacterium sp. (strain KMS), this protein is Glutamate--tRNA ligase.